Here is a 502-residue protein sequence, read N- to C-terminus: NAD(P)H-quinone oxidoreductase chain 4, chloroplastic (502 aa).

The next 13 helical transmembrane spans lie at 4 to 24, 39 to 59, 89 to 109, 115 to 132, 136 to 156, 169 to 189, 209 to 229, 244 to 264, 276 to 296, 315 to 335, 387 to 407, 418 to 438, and 466 to 486; these read YPWLTIIVLLPIPAGLLIPLL, LGICLLEFLLITHTFCYHFDI, IGLTPLTGFVTTLATLAAWPV, LFHSSMLAMYSGQVGLFT, ILLFFLMWELELIPVYLLLSM, FILYTAGGSIPLLIGALTMGL, IALEIVLYLSFFVAYAVKLPI, HYSTCMLLAGILLKMGGYGLI, SIFAPWLVIVGAFQIVYAASI, MGFVLIGIGSATNIGLNGAIL, SLALPGTSGFAAESMVFPGIV, IIITIVEAIGIILTPIYLLSM, and IFISICLLLPTIGIGLYPNLI.

It belongs to the complex I subunit 4 family.

It localises to the plastid. The protein resides in the chloroplast thylakoid membrane. The enzyme catalyses a plastoquinone + NADH + (n+1) H(+)(in) = a plastoquinol + NAD(+) + n H(+)(out). It carries out the reaction a plastoquinone + NADPH + (n+1) H(+)(in) = a plastoquinol + NADP(+) + n H(+)(out). The chain is NAD(P)H-quinone oxidoreductase chain 4, chloroplastic from Huperzia lucidula (Shining clubmoss).